The chain runs to 246 residues: Eukaryotic translation initiation factor 6 (246 aa).

The protein belongs to the eIF-6 family. Monomer. Associates with the 60S ribosomal subunit.

The protein resides in the cytoplasm. Its subcellular location is the nucleus. It is found in the nucleolus. Functionally, binds to the 60S ribosomal subunit and prevents its association with the 40S ribosomal subunit to form the 80S initiation complex in the cytoplasm. May also be involved in ribosome biogenesis. Involved in miRNA-mediated gene silencing. The chain is Eukaryotic translation initiation factor 6 from Caenorhabditis elegans.